The chain runs to 231 residues: Ribosomal RNA small subunit methyltransferase G (231 aa).

S-adenosyl-L-methionine is bound by residues G75, F80, A126–E127, and R142.

This sequence belongs to the methyltransferase superfamily. RNA methyltransferase RsmG family.

The protein localises to the cytoplasm. Specifically methylates the N7 position of a guanine in 16S rRNA. The chain is Ribosomal RNA small subunit methyltransferase G from Mycoplasma capricolum subsp. capricolum (strain California kid / ATCC 27343 / NCTC 10154).